The following is a 375-amino-acid chain: Leucoanthocyanidin dioxygenase 1 (375 aa).

A Fe2OG dioxygenase domain is found at 218-317; that stretch reads LLLQLKINYY…RLSWVVFCEP (100 aa). Residues His242, Asp244, and His298 each contribute to the Fe cation site. Arg308 contacts 2-oxoglutarate.

Belongs to the iron/ascorbate-dependent oxidoreductase family. The cofactor is L-ascorbate. Fe(2+) serves as cofactor.

The catalysed reaction is a (2R,3S,4S)-leucoanthocyanidin + 2-oxoglutarate + O2 = a 4-H-anthocyanidin with a 3-hydroxy group + succinate + CO2 + 2 H2O. It participates in pigment biosynthesis; anthocyanin biosynthesis. Functionally, involved in anthocyanin and protoanthocyanidin biosynthesis by catalyzing the oxidation of leucoanthocyanidins into anthocyanidins. The sequence is that of Leucoanthocyanidin dioxygenase 1 from Oryza sativa subsp. japonica (Rice).